The primary structure comprises 301 residues: Homoserine O-acetyltransferase (301 aa).

Cys-142 serves as the catalytic Acyl-thioester intermediate. Residues Lys-163 and Ser-192 each coordinate substrate. The Proton acceptor role is filled by His-235. Glu-237 is an active-site residue. Arg-249 contributes to the substrate binding site.

It belongs to the MetA family.

Its subcellular location is the cytoplasm. It catalyses the reaction L-homoserine + acetyl-CoA = O-acetyl-L-homoserine + CoA. It functions in the pathway amino-acid biosynthesis; L-methionine biosynthesis via de novo pathway; O-acetyl-L-homoserine from L-homoserine: step 1/1. Transfers an acetyl group from acetyl-CoA to L-homoserine, forming acetyl-L-homoserine. The sequence is that of Homoserine O-acetyltransferase from Novosphingobium aromaticivorans (strain ATCC 700278 / DSM 12444 / CCUG 56034 / CIP 105152 / NBRC 16084 / F199).